Here is a 792-residue protein sequence, read N- to C-terminus: Vicilin Car i 2.0101 (792 aa).

Residues 1–26 (MVTKAKIPLFLFLSALFLALVCSSLA) form the signal peptide. Disordered stretches follow at residues 132-153 (ERRERRRGRDDDDKENPRDPRE), 182-217 (RFEEEQRRQEERERRRGRDNDDEENPRDPREQYRQC), 240-272 (ERLEEEQRKQEERERRRGRDEDDQNPRDPEQRY), 302-325 (EERERQRGRDRQDPQQQYHRCQRR), and 350-394 (QQGR…ESGE). Basic and acidic residues-rich tracts occupy residues 182–200 (RFEEEQRRQEERERRRGRD) and 207–217 (PRDPREQYRQC). The span at 302–314 (EERERQRGRDRQD) shows a compositional bias: basic and acidic residues. The span at 315–325 (PQQQYHRCQRR) shows a compositional bias: low complexity. The span at 350 to 375 (QQGREWGPDQASPRRESRGREEEQQR) shows a compositional bias: basic and acidic residues. Cu cation is bound at residue tyrosine 379. 2 Cupin type-1 domains span residues 384 to 537 (QGLR…DRLE) and 582 to 754 (ISLK…EEIE). The Cu cation site is built by cysteine 652, histidine 654, and histidine 698. A coiled-coil region spans residues 727-754 (LAGQNNIINQLEREAKELSFNMPREEIE).

It belongs to the 7S seed storage protein family. In terms of assembly, homotrimer. In terms of tissue distribution, expressed in seed (at protein level). Expressed in seed.

Its function is as follows. Seed storage protein. This chain is Vicilin Car i 2.0101, found in Carya illinoinensis (Pecan).